The chain runs to 747 residues: MLPKTLTIWASLASLAVAQSGQVVFAKNADGKFVHSTDDLDQGQRKIRGKFLHITDIHPDPYFHVGAVAEDKCHVDPDHKDSDYPDEDSELVWFRATGKKKHNHHKGKDHEKMPKAGYYGHPLSSCDGPISLMNATFDWIDQNIRDEIDFIIWTGDNVRHDNDNRYPRLEQDIFGYNQIVSSKFHELFRYNETRDGEGHNGGGDPQHPLVIPIIPSLGNNDVFPHNLYLAGPSFQSRRMLQIWSEFVPEAQQHIFSRGSYYFQEVITGKLAVISLNTLYFYKSNPMSDGCDEKTDPGYKHLVWLGVVLDEMRQRGMKVWLSGHVPPVEKNYEDSCHLKLAYWLTEYRDIIVGSVFGHMNIDHFVVMDPKKIEKAQSQDLGTPGLGYKSHVTDFLDVAISASHPVHTFGSIYKRNYIESVREDYSEIPGPKKWLDEYASNFAIAHVSPSVIPNYFPSLRVWEYNITGLGEEIGNPPHPPPSFRAWSDVLEEFERDYAQDVMDEIEVEWFDANSDVIEAEDNDGDDDEDENEDDPEMLTEEAIKEGVANINPETGTLASIFGGLKFWKSSTAVATSSEPESDDYDSDLDAERKKGKKKGKKGKKGKKGKKGKKKKGKKGKKGKKGKRDKSMPPKFPKDLQPGPAYIPQLFTPIGYTQYYANITQFNKEYKKTGASNFEYVVEYTTNDAPYNFEHLTVRNWVELARVLGKNFRDLDLEAEKSKSDQLWKVYMDRAFVGTGAEYLEEPDDD.

A topological domain (cytoplasmic) is located at residue Met1. Residues 2-22 (LPKTLTIWASLASLAVAQSGQ) form a helical; Signal-anchor for type II membrane protein membrane-spanning segment. At 23 to 747 (VVFAKNADGK…AEYLEEPDDD (725 aa)) the chain is on the vacuolar side. N-linked (GlcNAc...) asparagine glycans are attached at residues Asn134, Asn191, and Asn463. A disordered region spans residues 570-640 (AVATSSEPES…PKFPKDLQPG (71 aa)). Residues 577–586 (PESDDYDSDL) are compositionally biased toward acidic residues. Residues 591 to 625 (KKGKKKGKKGKKGKKGKKGKKKKGKKGKKGKKGKR) are compositionally biased toward basic residues. Positions 626-635 (DKSMPPKFPK) are enriched in basic and acidic residues. N-linked (GlcNAc...) asparagine glycosylation is present at Asn659.

This sequence belongs to the endopolyphosphatase PPN1 family. A divalent metal cation is required as a cofactor. Processing by proteases in the vacuole may be required for activation.

The protein localises to the vacuole membrane. The enzyme catalyses [phosphate](n+1) + n H2O = (n+1) phosphate + n H(+). Functionally, catalyzes the hydrolysis of inorganic polyphosphate (polyP) chains of many hundreds of phosphate residues into shorter lengths. The sequence is that of Endopolyphosphatase (PPN1) from Yarrowia lipolytica (strain CLIB 122 / E 150) (Yeast).